Here is a 478-residue protein sequence, read N- to C-terminus: Cytochrome c lysine N-methyltransferase 1 (478 aa).

An SET domain is found at 32-284 (PCVSIERSQI…DRFEVFISYC (253 aa)). An SET-like region spans residues 199 to 299 (TRAVVLRVYA…VHFKHTYGFF (101 aa)).

This sequence belongs to the class V-like SAM-binding methyltransferase superfamily.

It is found in the cytoplasm. The protein resides in the cytosol. It catalyses the reaction L-lysyl-[cytochrome c] + S-adenosyl-L-methionine = N(6)-methyl-L-lysyl-[cytochrome c] + S-adenosyl-L-homocysteine + H(+). Methyltransferase which mediates trimethylation of cytochrome c (CYC1). The polypeptide is Cytochrome c lysine N-methyltransferase 1 (CTM1) (Eremothecium gossypii (strain ATCC 10895 / CBS 109.51 / FGSC 9923 / NRRL Y-1056) (Yeast)).